Consider the following 402-residue polypeptide: Phosphoglycerate kinase (402 aa).

Residues 24 to 26 (DFN), arginine 40, 63 to 66 (HFGR), arginine 122, and arginine 155 each bind substrate. ATP contacts are provided by residues lysine 206, glycine 297, glutamate 328, and 358–361 (GGDS).

It belongs to the phosphoglycerate kinase family. As to quaternary structure, monomer.

The protein localises to the cytoplasm. The enzyme catalyses (2R)-3-phosphoglycerate + ATP = (2R)-3-phospho-glyceroyl phosphate + ADP. The protein operates within carbohydrate degradation; glycolysis; pyruvate from D-glyceraldehyde 3-phosphate: step 2/5. The sequence is that of Phosphoglycerate kinase from Prochlorococcus marinus (strain MIT 9312).